The sequence spans 120 residues: NAD(P)H-quinone oxidoreductase subunit 3 (120 aa).

The next 3 membrane-spanning stretches (helical) occupy residues 10–30, 64–84, and 89–109; these read LLVFLIVCALLPVLALGASAL, MFALVFVIFDVETVFLYPWAV, and LGLLAFVEALIFIAILVVGLV.

Belongs to the complex I subunit 3 family. In terms of assembly, NDH-1 can be composed of about 15 different subunits; different subcomplexes with different compositions have been identified which probably have different functions.

It is found in the cellular thylakoid membrane. The enzyme catalyses a plastoquinone + NADH + (n+1) H(+)(in) = a plastoquinol + NAD(+) + n H(+)(out). The catalysed reaction is a plastoquinone + NADPH + (n+1) H(+)(in) = a plastoquinol + NADP(+) + n H(+)(out). In terms of biological role, NDH-1 shuttles electrons from an unknown electron donor, via FMN and iron-sulfur (Fe-S) centers, to quinones in the respiratory and/or the photosynthetic chain. The immediate electron acceptor for the enzyme in this species is believed to be plastoquinone. Couples the redox reaction to proton translocation, and thus conserves the redox energy in a proton gradient. Cyanobacterial NDH-1 also plays a role in inorganic carbon-concentration. This is NAD(P)H-quinone oxidoreductase subunit 3 from Synechococcus sp. (strain JA-3-3Ab) (Cyanobacteria bacterium Yellowstone A-Prime).